The primary structure comprises 1034 residues: Error-prone DNA polymerase (1034 aa).

The protein belongs to the DNA polymerase type-C family. DnaE2 subfamily.

It is found in the cytoplasm. It carries out the reaction DNA(n) + a 2'-deoxyribonucleoside 5'-triphosphate = DNA(n+1) + diphosphate. Functionally, DNA polymerase involved in damage-induced mutagenesis and translesion synthesis (TLS). It is not the major replicative DNA polymerase. In Pseudomonas fluorescens (strain ATCC BAA-477 / NRRL B-23932 / Pf-5), this protein is Error-prone DNA polymerase.